The sequence spans 214 residues: CASP-like protein 3A1 (214 aa).

Topologically, residues 1–49 (MTNGQKIEVAVQLPESKVAATENNETMSGPLVVGGGVAKPFGRKADVMH) are cytoplasmic. The helical transmembrane segment at 50-70 (VILRLLCTITSVTAVSFMVTA) threads the bilayer. The Extracellular portion of the chain corresponds to 71-96 (HQSSTVSIYGFMLPVRSKWSFSHSFE). The helical transmembrane segment at 97-117 (YLVGVSAAVAAHSLLQLLISM) threads the bilayer. The Cytoplasmic segment spans residues 118–132 (SRLLRKSPVIPSRSH). The helical transmembrane segment at 133-153 (AWLIFAGDQVFAYAMISAGAA) threads the bilayer. Topologically, residues 154–182 (ASGVTNLNRTGIQHTALPNFCKPLNYFCN) are extracellular. Residue asparagine 161 is glycosylated (N-linked (GlcNAc...) asparagine). A helical transmembrane segment spans residues 183–203 (HVAVSIAFAFISCLLLAALAV). Residues 204-214 (QEVIWLSKSKY) are Cytoplasmic-facing.

It belongs to the Casparian strip membrane proteins (CASP) family. In terms of assembly, homodimer and heterodimers.

The protein localises to the cell membrane. The sequence is that of CASP-like protein 3A1 from Ricinus communis (Castor bean).